We begin with the raw amino-acid sequence, 399 residues long: MGLSWTVPLEWGKNISTTNPLGFFPDHQLDPAFRANTRNPDWDHNPNKDHWTEANKVGVGAFGPGFTPPHGGLLGWSPQAQGMLKTLPADPPPASTNRQSGRQPTPITPPLRDTHPQAMQWNSTTFHQALQDPRVRGLYFPAGGSSSGTVNPVPTTASLISSIFSRIGDPAPNMESITSGFLGPLLVLQAGFFLLTKILTIPQSLDSWWTSLNFLGGAPVCLGQNSQSPTSNHSPTSCPPICPGYRWMCLRRFIIFLFILLLCLIFLLVLLDYQGMLPVCPLIPGSSTTSTGPCRTCMTLAQGTSMFPSCCCSKPSDGNCTCIPIPSSWAFGKFLWEWASARFSWLSLLVPFVQWFAGLSPTVWLSVIWMMWYWGPSLYDILSPFIPLLPIFFCLWVYI.

Met-1 is modified (N-acetylmethionine). Gly-2 is lipidated: N-myristoyl glycine; by host. The tract at residues 2–118 (GLSWTVPLEW…PPLRDTHPQA (117 aa)) is pre-S1. Residues 2–173 (GLSWTVPLEW…FSRIGDPAPN (172 aa)) are pre-S. The Virion surface; in external conformation segment spans residues 2-180 (GLSWTVPLEW…APNMESITSG (179 aa)). Residues 2–252 (GLSWTVPLEW…PGYRWMCLRR (251 aa)) are Intravirion; in internal conformation-facing. The N-linked (GlcNAc...) asparagine glycan is linked to Ser-4. Residues 85–110 (KTLPADPPPASTNRQSGRQPTPITPP) form a disordered region. A compositionally biased stretch (polar residues) spans 95-105 (STNRQSGRQPT). Residues 119 to 173 (MQWNSTTFHQALQDPRVRGLYFPAGGSSSGTVNPVPTTASLISSIFSRIGDPAPN) are pre-S2. Residues 181 to 201 (FLGPLLVLQAGFFLLTKILTI) traverse the membrane as a helical segment. Residues 202–252 (PQSLDSWWTSLNFLGGAPVCLGQNSQSPTSNHSPTSCPPICPGYRWMCLRR) are Intravirion; in external conformation-facing. A helical membrane pass occupies residues 253–273 (FIIFLFILLLCLIFLLVLLDY). The Virion surface segment spans residues 274-347 (QGMLPVCPLI…WASARFSWLS (74 aa)). Asn-319 carries N-linked (GlcNAc...) asparagine; by host glycosylation. A helical transmembrane segment spans residues 348–368 (LLVPFVQWFAGLSPTVWLSVI). Over 369–374 (WMMWYW) the chain is Intravirion. The chain crosses the membrane as a helical span at residues 375–397 (GPSLYDILSPFIPLLPIFFCLWV). Residues 398–399 (YI) lie on the Virion surface side of the membrane.

This sequence belongs to the orthohepadnavirus major surface antigen family. As to quaternary structure, in its internal form (Li-HBsAg), interacts with the capsid protein and with the isoform S. Interacts with host chaperone CANX. Associates with host chaperone CANX through its pre-S2 N glycan; this association may be essential for isoform M proper secretion. In terms of assembly, interacts with isoform L. Interacts with the antigens of satellite virus HDV (HDVAgs); this interaction is required for encapsidation of HDV genomic RNA. In terms of processing, isoform M is N-terminally acetylated by host at a ratio of 90%, and N-glycosylated by host at the pre-S2 region. Myristoylated.

The protein localises to the virion membrane. Functionally, the large envelope protein exists in two topological conformations, one which is termed 'external' or Le-HBsAg and the other 'internal' or Li-HBsAg. In its external conformation the protein attaches the virus to cell receptors and thereby initiating infection. This interaction determines the species specificity and liver tropism. This attachment induces virion internalization predominantly through caveolin-mediated endocytosis. The large envelope protein also assures fusion between virion membrane and endosomal membrane. In its internal conformation the protein plays a role in virion morphogenesis and mediates the contact with the nucleocapsid like a matrix protein. The middle envelope protein plays an important role in the budding of the virion. It is involved in the induction of budding in a nucleocapsid independent way. In this process the majority of envelope proteins bud to form subviral lipoprotein particles of 22 nm of diameter that do not contain a nucleocapsid. In Homo sapiens (Human), this protein is Large envelope protein.